A 218-amino-acid chain; its full sequence is NADH-ubiquinone oxidoreductase 21 kDa subunit, mitochondrial (218 aa).

The transit peptide at 1 to 33 (MSALRITTASAARMLRTSNAMMPSVMGAAQRRA) directs the protein to the mitochondrion. Residues 31-74 (RRALSDSAEPARVPSVESARVPEKLAKEDSPLATPKRNSPDYNV) form a disordered region. The span at 50-60 (RVPEKLAKEDS) shows a compositional bias: basic and acidic residues.

The protein belongs to the complex I NDUFS4 subunit family. In terms of assembly, complex I is composed of about 40 different subunits. This is a component of the iron-sulfur (IP) fragment of the enzyme.

It localises to the mitochondrion inner membrane. Functionally, accessory subunit of the mitochondrial membrane respiratory chain NADH dehydrogenase (Complex I), that is believed not to be involved in catalysis. Complex I functions in the transfer of electrons from NADH to the respiratory chain. The immediate electron acceptor for the enzyme is believed to be ubiquinone. This Neurospora crassa (strain ATCC 24698 / 74-OR23-1A / CBS 708.71 / DSM 1257 / FGSC 987) protein is NADH-ubiquinone oxidoreductase 21 kDa subunit, mitochondrial (nuo-21).